The sequence spans 149 residues: MADNARAARMAKRIQTIVASAIERDIKDRRLEFVTITDVTMTGDLHDAKVFYTVRGASIEEEPDLEAAAEALHRARGQLRKIVGQQLGVRFTPTLTYSIDTVPEASAHMEALLDRARKRDEELAKLREGAAPAGDADPYKTSSKSESEE.

Positions 123–149 (LAKLREGAAPAGDADPYKTSSKSESEE) are disordered.

The protein belongs to the RbfA family. In terms of assembly, monomer. Binds 30S ribosomal subunits, but not 50S ribosomal subunits or 70S ribosomes.

The protein resides in the cytoplasm. Its function is as follows. One of several proteins that assist in the late maturation steps of the functional core of the 30S ribosomal subunit. Associates with free 30S ribosomal subunits (but not with 30S subunits that are part of 70S ribosomes or polysomes). Required for efficient processing of 16S rRNA. May interact with the 5'-terminal helix region of 16S rRNA. The polypeptide is Ribosome-binding factor A (Corynebacterium glutamicum (strain ATCC 13032 / DSM 20300 / JCM 1318 / BCRC 11384 / CCUG 27702 / LMG 3730 / NBRC 12168 / NCIMB 10025 / NRRL B-2784 / 534)).